The primary structure comprises 383 residues: Acetylornithine deacetylase (383 aa).

H80 provides a ligand contact to Zn(2+). Residue D82 is part of the active site. D112 is a binding site for Zn(2+). E144 is an active-site residue. The Zn(2+) site is built by E145, E169, and H355.

Belongs to the peptidase M20A family. ArgE subfamily. In terms of assembly, homodimer. Zn(2+) serves as cofactor. The cofactor is Co(2+). It depends on glutathione as a cofactor.

The protein localises to the cytoplasm. The catalysed reaction is N(2)-acetyl-L-ornithine + H2O = L-ornithine + acetate. It participates in amino-acid biosynthesis; L-arginine biosynthesis; L-ornithine from N(2)-acetyl-L-ornithine (linear): step 1/1. Catalyzes the hydrolysis of the amide bond of N(2)-acetylated L-amino acids. Cleaves the acetyl group from N-acetyl-L-ornithine to form L-ornithine, an intermediate in L-arginine biosynthesis pathway, and a branchpoint in the synthesis of polyamines. The chain is Acetylornithine deacetylase from Escherichia coli O127:H6 (strain E2348/69 / EPEC).